Reading from the N-terminus, the 105-residue chain is Large ribosomal subunit protein eL30 (105 aa).

Belongs to the eukaryotic ribosomal protein eL30 family.

The polypeptide is Large ribosomal subunit protein eL30 (RPL30) (Trypanosoma brucei brucei).